A 339-amino-acid chain; its full sequence is Heat-inducible transcription repressor HrcA (339 aa).

This sequence belongs to the HrcA family.

Negative regulator of class I heat shock genes (grpE-dnaK-dnaJ and groELS operons). Prevents heat-shock induction of these operons. The polypeptide is Heat-inducible transcription repressor HrcA (Thiobacillus denitrificans (strain ATCC 25259 / T1)).